Consider the following 62-residue polypeptide: MDTEEKKKTTASVEHARMLQNEIQQLFAQLRDTNSQIRCDLNEFEQIKESSTTADSTTNSAN.

A coiled-coil region spans residues 14–49 (EHARMLQNEIQQLFAQLRDTNSQIRCDLNEFEQIKE).

The chain is Coiled-coil domain-containing protein YLR146W-A from Saccharomyces cerevisiae (strain ATCC 204508 / S288c) (Baker's yeast).